A 141-amino-acid polypeptide reads, in one-letter code: Hemoglobin subunit alpha-A (141 aa).

Residues 1–141 enclose the Globin domain; that stretch reads VLSASDKANV…VGTVLTAKYR (141 aa). Residue H58 coordinates O2. H87 is a binding site for heme b.

The protein belongs to the globin family. As to quaternary structure, heterotetramer of two alpha chains and two beta chains. In terms of tissue distribution, red blood cells.

In terms of biological role, involved in oxygen transport from the lung to the various peripheral tissues. In Sturnus vulgaris (Starling), this protein is Hemoglobin subunit alpha-A (HBAA).